Here is a 278-residue protein sequence, read N- to C-terminus: Putative phosphoenolpyruvate synthase regulatory protein (278 aa).

157-164 is a binding site for ADP; it reads GVSRSGKT.

This sequence belongs to the pyruvate, phosphate/water dikinase regulatory protein family. PSRP subfamily.

The catalysed reaction is [pyruvate, water dikinase] + ADP = [pyruvate, water dikinase]-phosphate + AMP + H(+). It carries out the reaction [pyruvate, water dikinase]-phosphate + phosphate + H(+) = [pyruvate, water dikinase] + diphosphate. In terms of biological role, bifunctional serine/threonine kinase and phosphorylase involved in the regulation of the phosphoenolpyruvate synthase (PEPS) by catalyzing its phosphorylation/dephosphorylation. This Vibrio parahaemolyticus serotype O3:K6 (strain RIMD 2210633) protein is Putative phosphoenolpyruvate synthase regulatory protein.